A 296-amino-acid polypeptide reads, in one-letter code: Peptide transport system permease protein SapC (296 aa).

Residues 1 to 28 (MPYDSVYSEKRPPGTLRTAWRKFYSDAP) lie on the Cytoplasmic side of the membrane. A helical transmembrane segment spans residues 29-49 (AMVGLYGCAGLALLCIFGGWI). The Periplasmic portion of the chain corresponds to 50-98 (APYGIDQQFLGYQLLPPSWSRYGEVSFFLGTDDLGRDVLSRLLSGAAPT). Residues 99–119 (VGGAFIVTLAATLCGLVLGVV) form a helical membrane-spanning segment. The ABC transmembrane type-1 domain occupies 99–284 (VGGAFIVTLA…LSVLLVNLLG (186 aa)). Over 120-133 (AGATHGLRSAVLNH) the chain is Cytoplasmic. Residues 134–154 (ILDTLLSIPSLLLAIIVVAFA) traverse the membrane as a helical segment. Residues 155–196 (GPHLSHAMFAVWLALLPRMVRSVYSMVHDELEKEYVIAARLD) lie on the Periplasmic side of the membrane. A helical membrane pass occupies residues 197–217 (GATTLNILWFAILPNITAGLV). At 218–222 (TEITR) the chain is on the cytoplasmic side. Residues 223–243 (ALSMAILDIAALGFLDLGAQL) form a helical membrane-spanning segment. The Periplasmic segment spans residues 244–257 (PSPEWGAMLGDALE). The chain crosses the membrane as a helical span at residues 258–278 (LIYVAPWTVMLPGAAITLSVL). At 279–296 (LVNLLGDGIRRAIIAGVE) the chain is on the cytoplasmic side.

The protein belongs to the binding-protein-dependent transport system permease family. OppBC subfamily.

It localises to the cell inner membrane. Functionally, involved in a peptide intake transport system that plays a role in the resistance to antimicrobial peptides. This is Peptide transport system permease protein SapC (sapC) from Salmonella typhi.